Reading from the N-terminus, the 141-residue chain is Large ribosomal subunit protein uL23B (141 aa).

Residues M1 to A22 form a disordered region.

Belongs to the universal ribosomal protein uL23 family. Component of the large ribosomal subunit (LSU). Mature yeast ribosomes consist of a small (40S) and a large (60S) subunit. The 40S small subunit contains 1 molecule of ribosomal RNA (18S rRNA) and at least 33 different proteins. The large 60S subunit contains 3 rRNA molecules (25S, 5.8S and 5S rRNA) and at least 46 different proteins. uL23 is associated with the polypeptide exit tunnel.

Its subcellular location is the cytoplasm. Functionally, this protein binds to a specific region on the 26S rRNA. Its function is as follows. Component of the ribosome, a large ribonucleoprotein complex responsible for the synthesis of proteins in the cell. The small ribosomal subunit (SSU) binds messenger RNAs (mRNAs) and translates the encoded message by selecting cognate aminoacyl-transfer RNA (tRNA) molecules. The large subunit (LSU) contains the ribosomal catalytic site termed the peptidyl transferase center (PTC), which catalyzes the formation of peptide bonds, thereby polymerizing the amino acids delivered by tRNAs into a polypeptide chain. The nascent polypeptides leave the ribosome through a tunnel in the LSU and interact with protein factors that function in enzymatic processing, targeting, and the membrane insertion of nascent chains at the exit of the ribosomal tunnel. uL23 is a major component of the universal docking site for these factors at the polypeptide exit tunnel. The polypeptide is Large ribosomal subunit protein uL23B (rpl2502) (Schizosaccharomyces pombe (strain 972 / ATCC 24843) (Fission yeast)).